Reading from the N-terminus, the 294-residue chain is N-acetylmuramic acid 6-phosphate etherase (294 aa).

The SIS domain occupies 54–217; it reads VIASFRKGGR…STTSMIGVGK (164 aa). Glu82 (proton donor) is an active-site residue. Residue Glu113 is part of the active site.

Belongs to the GCKR-like family. MurNAc-6-P etherase subfamily. Homodimer.

The enzyme catalyses N-acetyl-D-muramate 6-phosphate + H2O = N-acetyl-D-glucosamine 6-phosphate + (R)-lactate. Its pathway is amino-sugar metabolism; N-acetylmuramate degradation. Its function is as follows. Specifically catalyzes the cleavage of the D-lactyl ether substituent of MurNAc 6-phosphate, producing GlcNAc 6-phosphate and D-lactate. In Exiguobacterium sp. (strain ATCC BAA-1283 / AT1b), this protein is N-acetylmuramic acid 6-phosphate etherase.